The following is a 421-amino-acid chain: MLRQILSDMFIDPDLLAELSEEQKQILFYKMREEQIRRWKEREAAMERKESLPVKSRPKKENGKSVHWKLGADKQVWVWVMGEHHLDKPYDVLCDEILAEREHLRAAKDSELRKTQSLELANSLKIKSQNCDLQAMKKTEPQNVTRKAASEEASGQGPRAIPTRKDDKAQTKPVKEKDHEEMKQTEDEKTKQIYKSWKEDSEWQASLRKSKAADEKRRSLAKQAREDYKRLSQRGRSGDGLQNPLTGPQKPRRPPLPPKPQFLQPLGIPPKSLGNQGVIRTEISSAQMDTIRWFKEEQLPFRAGYQKNSDTIAPWFHGILTLKKANELLSTGVPGSFLIRVSEKIKGYALSYLSEEGCKHFLIDASANSYSFLGVDQLQHATLADLVEYHKEEPITSLGKELLLYPCGQQDKLPDYLELFQ.

Ser117 and Ser123 each carry phosphoserine. Positions 132–271 are disordered; that stretch reads DLQAMKKTEP…FLQPLGIPPK (140 aa). 2 stretches are compositionally biased toward basic and acidic residues: residues 163–201 and 211–230; these read TRKD…KEDS and KAAD…DYKR. A Phosphoserine modification is found at Ser232. Positions 315–407 constitute an SH2 domain; that stretch reads WFHGILTLKK…LGKELLLYPC (93 aa).

In terms of assembly, interacts with ESR1. In the kidney, expressed only in the glomerulus. Expressed in T-cells, B-cells, macrophages and dendritic cells (at protein level). In adult, highest levels are found in muscle and lung with lower levels in kidney.

Its subcellular location is the cytoplasm. In terms of biological role, inhibits estrogen-induced cell proliferation by competing with PLCG for binding to ESR1, blocking the effect of estrogen on PLCG and repressing estrogen-induced proliferation. May play a role in T-cell development and function. This Mus musculus (Mouse) protein is SH2 domain-containing protein 4A (Sh2d4a).